We begin with the raw amino-acid sequence, 356 residues long: MKLTINKNSAKWMQLPRDVLVGHGVLEEIGDVCRDLKLKGNALIVTGNTTRDVAGKRVSTLLENAGSSTEMVLTCRATMEEVDKIMQKASETGATFLLGIGSGRSIDLAKLASTRLEIPFISVPTAASHDGIASSRASIIDNGKNASVQAQAPIAVVADTEIISAAPFRFLVAGCGDIISNYTAVLDWELASRLRNEYFGEYAAALSRMAARVVIENADSIKPEHETSARLVVKALVSNGVAMSIAGSSRPASGSEHMFSHALDRIAPKPALHGEQCGVGTIMMMYLHGGNWQEIRDALKKIGAPTNAEELGIEDRYIVEALLHAHSIRPDRYTILGNGLTPSAAEKVARITKVIS.

NAD(+) contacts are provided by residues 103–107 (GRSID) and 125–128 (TAAS). Asp-130 serves as a coordination point for substrate. Ser-134 contacts NAD(+). Residue Asp-177 coordinates substrate. Residues Asp-177 and His-257 each coordinate Zn(2+). His-261 lines the substrate pocket. His-273 serves as a coordination point for Zn(2+).

This sequence belongs to the glycerol-1-phosphate dehydrogenase family. It depends on Zn(2+) as a cofactor.

The protein localises to the cytoplasm. The enzyme catalyses sn-glycerol 1-phosphate + NAD(+) = dihydroxyacetone phosphate + NADH + H(+). The catalysed reaction is sn-glycerol 1-phosphate + NADP(+) = dihydroxyacetone phosphate + NADPH + H(+). It functions in the pathway membrane lipid metabolism; glycerophospholipid metabolism. Catalyzes the NAD(P)H-dependent reduction of dihydroxyacetonephosphate (DHAP or glycerone phosphate) to glycerol 1-phosphate (G1P). The G1P thus generated is used as the glycerophosphate backbone of phospholipids in the cellular membranes of Archaea. This chain is Glycerol-1-phosphate dehydrogenase [NAD(P)+], found in Methanosarcina acetivorans (strain ATCC 35395 / DSM 2834 / JCM 12185 / C2A).